The following is a 1105-amino-acid chain: Tubulin-folding cofactor D (1105 aa).

Residues Asn-122 and Asn-126 are each glycosylated (N-linked (GlcNAc...) asparagine). HEAT repeat units follow at residues 308–345 (IYLE…RLPW), 347–385 (LAEQ…WHGA), 401–446 (SKCL…CYSK), and 452–489 (LQTN…RHAS). Residue Asn-373 is glycosylated (N-linked (GlcNAc...) asparagine). 3 N-linked (GlcNAc...) asparagine glycosylation sites follow: Asn-721, Asn-883, and Asn-1083.

As to quaternary structure, interacts with alp21.

The protein localises to the cytoplasm. The protein resides in the cytoskeleton. Has a function in the folding of beta-tubulin. Microtubule-associated protein that is essential to direct polarized cell growth and to position the nucleus and septum to the center of the cell during mitosis. The sequence is that of Tubulin-folding cofactor D (alp1) from Schizosaccharomyces pombe (strain 972 / ATCC 24843) (Fission yeast).